The sequence spans 285 residues: Retron Ec67 DNA adenine methylase (285 aa).

The S-adenosyl-L-methionine site is built by W7, K11, D51, and D179.

This sequence belongs to the N(4)/N(6)-methyltransferase family.

The enzyme catalyses a 2'-deoxyadenosine in DNA + S-adenosyl-L-methionine = an N(6)-methyl-2'-deoxyadenosine in DNA + S-adenosyl-L-homocysteine + H(+). In terms of biological role, an alpha subtype methylase that recognizes the double-stranded sequence 5'-GATC-3' and methylates A-2 on both strands. May play a regulatory role in the functions of the retron. This chain is Retron Ec67 DNA adenine methylase, found in Escherichia coli.